The sequence spans 710 residues: multidrug resistance regulator 2 (710 aa).

A DNA-binding region (zn(2)-C6 fungal-type) is located at residues 11–37 (CDACRSRKIKCNRQTPCASCHKSKRDC). The next 2 membrane-spanning stretches (helical) occupy residues 475–495 (DLVI…LYLF) and 525–545 (LFLA…TNFL).

The protein localises to the nucleus. It is found in the membrane. Transcription factor that controls the expression of CDR1, the major multidrug efflux pump. Required for yeast cell adherence to silicone substrate and plays a role in virulence. This is multidrug resistance regulator 2 from Candida albicans (strain SC5314 / ATCC MYA-2876) (Yeast).